The sequence spans 946 residues: Altered inheritance of mitochondria protein 3 (946 aa).

2 disordered regions span residues 1–333 and 351–903; these read MGFW…PQMN and MSST…KSLE. A compositionally biased stretch (basic residues) spans 36-54; it reads ASKKHYNNSKARRERKSGK. Phosphoserine occurs at positions 57, 58, and 64. Residues 59 to 68 are compositionally biased toward acidic residues; it reads DEEYESEDEM. The span at 69–84 shows a compositional bias: basic and acidic residues; it reads EHERKPTDIRSLKDPK. Composition is skewed to low complexity over residues 93–105 and 130–158; these read PGQK…QQQQ and QSQY…PPIY. Positions 166-244 are enriched in polar residues; the sequence is GSNSNATSYQ…YVSHGSTNLG (79 aa). Low complexity-rich tracts occupy residues 245–267 and 306–320; these read QSQF…VLPS and QQQQ…QQQQ. Residues 351 to 364 show a composition bias toward polar residues; the sequence is MSSTTNMQDSNPSY. The segment covering 376-392 has biased composition (pro residues); the sequence is GGQPPVPVRMQPQPPQP. The segment covering 463 to 472 has biased composition (polar residues); that stretch reads IQPNTTSSAA. S473 is subject to Phosphoserine. Composition is skewed to basic and acidic residues over residues 485–499, 523–538, and 608–625; these read DNER…DEST, HGLD…KNAS, and EIKD…DRNV. Low complexity-rich tracts occupy residues 627–642 and 666–675; these read PSLL…SQSQ and SQSSNSSDSS. T728 carries the phosphothreonine modification. Over residues 748–758 the composition is skewed to basic and acidic residues; sequence DSSKDANKYEK. Positions 762–773 are enriched in polar residues; sequence PVTSSIQAQQST. The residue at position 860 (T860) is a Phosphothreonine. Residues 861–878 are compositionally biased toward pro residues; it reads PPRPPPSRSSPKKVPPVV. Residues 887–898 show a composition bias toward basic residues; it reads KKPPVVPKKKPL.

The protein belongs to the AIM3 family. In terms of assembly, interacts with RVS167.

It is found in the membrane raft. The sequence is that of Altered inheritance of mitochondria protein 3 (AIM3) from Saccharomyces cerevisiae (strain Lalvin EC1118 / Prise de mousse) (Baker's yeast).